The chain runs to 369 residues: Porphobilinogen deaminase, chloroplastic (369 aa).

The transit peptide at 1–46 (MEMTLYSSSSFSLPSAPSNPSLSLFTSSFRFSSFKTSPFSKCRIRA) directs the protein to the chloroplast. The residue at position 303 (Cys303) is an S-(dipyrrolylmethanemethyl)cysteine.

It belongs to the HMBS family. Dipyrromethane serves as cofactor.

The protein resides in the plastid. It is found in the chloroplast. It carries out the reaction 4 porphobilinogen + H2O = hydroxymethylbilane + 4 NH4(+). It functions in the pathway porphyrin-containing compound metabolism; protoporphyrin-IX biosynthesis; coproporphyrinogen-III from 5-aminolevulinate: step 2/4. The protein operates within porphyrin-containing compound metabolism; chlorophyll biosynthesis. Its function is as follows. Tetrapolymerization of the monopyrrole PBG into the hydroxymethylbilane pre-uroporphyrinogen in several discrete steps. The sequence is that of Porphobilinogen deaminase, chloroplastic (HEMC) from Pisum sativum (Garden pea).